Reading from the N-terminus, the 859-residue chain is Envelope glycoprotein (859 aa).

Residues 1-6 constitute a propeptide that is removed on maturation; sequence MVSIAF. Topologically, residues 7 to 614 are extracellular; sequence YGGIPGGIST…KDLWSHIGNW (608 aa). Residues Asn40, Asn112, Asn141, Asn148, Asn186, Asn214, Asn233, Asn244, Asn340, Asn368, Asn399, Asn406, Asn411, and Asn422 are each glycosylated (N-linked (GlcNAc...) asparagine; by host). A fusion peptide region spans residues 446–466; it reads FGISAIVAAIVAATAIARSAT. N-linked (GlcNAc...) asparagine; by host glycosylation is found at Asn483 and Asn490. The segment at 498 to 513 is immunosuppression; that stretch reads LIERQIKILYAMILQT. N-linked (GlcNAc...) asparagine; by host glycans are attached at residues Asn550 and Asn557. 2 coiled-coil regions span residues 576 to 624 and 663 to 699; these read ILTT…SIIK and KKFHHKHASREDTWDQAQHNIHLAGVTGGSGDKYYKQ. Residues 615 to 635 form a helical membrane-spanning segment; it reads IPGLGASIIKYIVMFLLIYLL. The Cytoplasmic segment spans residues 636–859; that stretch reads LTSSPKILRA…TSHVSMPQYV (224 aa).

As to quaternary structure, the mature envelope protein (Env) consists of a trimer of SU-TM heterodimers attached by noncovalent interactions or by a labile interchain disulfide bond. In terms of processing, specific enzymatic cleavages in vivo yield mature proteins. Envelope glycoproteins are synthesized as an inactive precursor that is N-glycosylated and processed likely by host cell furin or by a furin-like protease in the Golgi to yield the mature SU and TM proteins. The cleavage site between SU and TM requires the minimal sequence [KR]-X-[KR]-R.

Its subcellular location is the virion membrane. The protein resides in the host cell membrane. The surface protein (SU) attaches the virus to the host cell by binding to its receptor. This interaction triggers the refolding of the transmembrane protein (TM) and is thought to activate its fusogenic potential by unmasking its fusion peptide. Fusion occurs at the host cell plasma membrane. Its function is as follows. The transmembrane protein (TM) acts as a class I viral fusion protein. Under the current model, the protein has at least 3 conformational states: pre-fusion native state, pre-hairpin intermediate state, and post-fusion hairpin state. During viral and target cell membrane fusion, the coiled coil regions (heptad repeats) assume a trimer-of-hairpins structure, positioning the fusion peptide in close proximity to the C-terminal region of the ectodomain. The formation of this structure appears to drive apposition and subsequent fusion of viral and target cell membranes. Membranes fusion leads to delivery of the nucleocapsid into the cytoplasm. The chain is Envelope glycoprotein (env) from Equus asinus (Donkey).